The primary structure comprises 36 residues: Egg-laying-like hormone (36 aa).

Position 36 is a lysine amide (lysine 36).

In terms of tissue distribution, supra, subesophageal ganglia and segmental ganglia of the ventral nerve cord and brain.

Functionally, may be involved in leech reproduction. This Theromyzon tessulatum (Duck leech) protein is Egg-laying-like hormone.